The chain runs to 103 residues: Nucleoid-associated protein BH0035 (103 aa).

Positions 1–20 (MKNMGQMMKQMQKMQKQMMK) are enriched in low complexity. Residues 1-29 (MKNMGQMMKQMQKMQKQMMKAQEELKEKT) form a disordered region.

This sequence belongs to the YbaB/EbfC family. As to quaternary structure, homodimer.

The protein localises to the cytoplasm. Its subcellular location is the nucleoid. Binds to DNA and alters its conformation. May be involved in regulation of gene expression, nucleoid organization and DNA protection. In Halalkalibacterium halodurans (strain ATCC BAA-125 / DSM 18197 / FERM 7344 / JCM 9153 / C-125) (Bacillus halodurans), this protein is Nucleoid-associated protein BH0035.